Consider the following 254-residue polypeptide: MTLAKRIVPALDIKNGRVVKGVNFVNLREVGDPVESAKAYQAAGADELVFLDITATLEERDTIMSVVDAVSREVFIPLTVGGGIRTTEDMGRLIKAGADKIFVNSEAVKNPALITDGAKIFGSQAIVGAIDAKWDESAGIYRVYVSGGSKPTSLDAIEWAFELVARGAGELLVTSMDADGTKKGYDIQLYDQLADAVNVPVVASGGAGSTQDFVNLFEKTKIDAALAASVFHFGEIKIPNLKRTLKDDGVEIRI.

Active-site residues include D12 and D131.

This sequence belongs to the HisA/HisF family. In terms of assembly, heterodimer of HisH and HisF.

Its subcellular location is the cytoplasm. The catalysed reaction is 5-[(5-phospho-1-deoxy-D-ribulos-1-ylimino)methylamino]-1-(5-phospho-beta-D-ribosyl)imidazole-4-carboxamide + L-glutamine = D-erythro-1-(imidazol-4-yl)glycerol 3-phosphate + 5-amino-1-(5-phospho-beta-D-ribosyl)imidazole-4-carboxamide + L-glutamate + H(+). It participates in amino-acid biosynthesis; L-histidine biosynthesis; L-histidine from 5-phospho-alpha-D-ribose 1-diphosphate: step 5/9. Functionally, IGPS catalyzes the conversion of PRFAR and glutamine to IGP, AICAR and glutamate. The HisF subunit catalyzes the cyclization activity that produces IGP and AICAR from PRFAR using the ammonia provided by the HisH subunit. The sequence is that of Imidazole glycerol phosphate synthase subunit HisF from Leuconostoc mesenteroides subsp. mesenteroides (strain ATCC 8293 / DSM 20343 / BCRC 11652 / CCM 1803 / JCM 6124 / NCDO 523 / NBRC 100496 / NCIMB 8023 / NCTC 12954 / NRRL B-1118 / 37Y).